The primary structure comprises 239 residues: Ribosomal RNA small subunit methyltransferase G (239 aa).

S-adenosyl-L-methionine is bound by residues G78, F83, 129 to 130 (AE), and R148.

This sequence belongs to the methyltransferase superfamily. RNA methyltransferase RsmG family.

The protein localises to the cytoplasm. Functionally, specifically methylates the N7 position of a guanine in 16S rRNA. The sequence is that of Ribosomal RNA small subunit methyltransferase G from Clostridium botulinum (strain Loch Maree / Type A3).